The chain runs to 138 residues: Thyrotropin subunit beta (138 aa).

The N-terminal stretch at 1 to 20 is a signal peptide; that stretch reads MTAIFLMSMVFGLACGQTMS. 6 disulfide bridges follow: Cys-22–Cys-72, Cys-36–Cys-87, Cys-39–Cys-125, Cys-47–Cys-103, Cys-51–Cys-105, and Cys-108–Cys-115. Residue Asn-43 is glycosylated (N-linked (GlcNAc...) asparagine). The propeptide occupies 133-138; the sequence is VVEFSI.

This sequence belongs to the glycoprotein hormones subunit beta family. As to quaternary structure, heterodimer of a common alpha chain and a unique beta chain which confers biological specificity to thyrotropin, lutropin, follitropin and gonadotropin.

The protein localises to the secreted. In terms of biological role, indispensable for the control of thyroid structure and metabolism. This Equus caballus (Horse) protein is Thyrotropin subunit beta (TSHB).